A 214-amino-acid polypeptide reads, in one-letter code: GTP-binding nuclear protein GSP1/Ran (214 aa).

The Small GTPase Ran-type domain maps to 4–168 (EVPTFKLVLV…LWLARKLAGN (165 aa)). Residue 15-22 (DGGTGKTT) coordinates GTP. The segment at 34–42 (KKYIATIGV) is switch-I. Residues Gly65, 119–122 (NKVD), and 147–149 (SAK) each bind GTP. The segment at 65–81 (GQEKFGGLRDGYYINAQ) is switch-II.

It belongs to the small GTPase superfamily. Ran family. Found in a nuclear export complex with RanGTP, exportin and pre-miRNA.

Its subcellular location is the nucleus. Its function is as follows. GTP-binding protein involved in nucleocytoplasmic transport. Required for the import of protein into the nucleus and also for RNA export. Involved in chromatin condensation and control of cell cycle. The sequence is that of GTP-binding nuclear protein GSP1/Ran (GSP1) from Candida glabrata (strain ATCC 2001 / BCRC 20586 / JCM 3761 / NBRC 0622 / NRRL Y-65 / CBS 138) (Yeast).